A 270-amino-acid polypeptide reads, in one-letter code: MIISFVNNKGGVLKTTMATNVAGSLVKLCPEQRKVILDLDGQGNVSASFGQNPERLNNTLIDILLKVPKFNGANSSIEIDDCLLPVYEGLDILPCNFELNFADIDIARKKYKASDIAEIVKQLTRRYDFVLLDTPPNMATLVSTAMSLSDVIVIPFEPDQYSMLGLMRIVETIDTFKEKNPNLKTILVPTKVNMRTRLHNDVIELVKSKAHKNNVAFSEHFVSLTSKSSAAVGYEKLPISLVSPTSNKKYQTEYLEITKEILNLVNHGHQ.

The protein belongs to the ParA family.

This is ParA family protein MPN_688 from Mycoplasma pneumoniae (strain ATCC 29342 / M129 / Subtype 1) (Mycoplasmoides pneumoniae).